Reading from the N-terminus, the 367-residue chain is tRNA-specific 2-thiouridylase MnmA (367 aa).

ATP contacts are provided by residues 13–20 (GLSGGVDS) and Met-39. The segment at 99 to 101 (NPD) is interaction with target base in tRNA. Cys-104 functions as the Nucleophile in the catalytic mechanism. Cys-104 and Cys-200 form a disulfide bridge. Position 128 (Gly-128) interacts with ATP. Positions 150–152 (KDQ) are interaction with tRNA. Catalysis depends on Cys-200, which acts as the Cysteine persulfide intermediate. Residues 307-308 (RY) form an interaction with tRNA region.

This sequence belongs to the MnmA/TRMU family.

It localises to the cytoplasm. The catalysed reaction is S-sulfanyl-L-cysteinyl-[protein] + uridine(34) in tRNA + AH2 + ATP = 2-thiouridine(34) in tRNA + L-cysteinyl-[protein] + A + AMP + diphosphate + H(+). Functionally, catalyzes the 2-thiolation of uridine at the wobble position (U34) of tRNA, leading to the formation of s(2)U34. The sequence is that of tRNA-specific 2-thiouridylase MnmA from Neisseria meningitidis serogroup C (strain 053442).